The primary structure comprises 557 residues: 2-succinyl-5-enolpyruvyl-6-hydroxy-3-cyclohexene-1-carboxylate synthase (557 aa).

It belongs to the TPP enzyme family. MenD subfamily. Homodimer. The cofactor is Mg(2+). It depends on Mn(2+) as a cofactor. Requires thiamine diphosphate as cofactor.

The catalysed reaction is isochorismate + 2-oxoglutarate + H(+) = 5-enolpyruvoyl-6-hydroxy-2-succinyl-cyclohex-3-ene-1-carboxylate + CO2. Its pathway is quinol/quinone metabolism; 1,4-dihydroxy-2-naphthoate biosynthesis; 1,4-dihydroxy-2-naphthoate from chorismate: step 2/7. It participates in quinol/quinone metabolism; menaquinone biosynthesis. Catalyzes the thiamine diphosphate-dependent decarboxylation of 2-oxoglutarate and the subsequent addition of the resulting succinic semialdehyde-thiamine pyrophosphate anion to isochorismate to yield 2-succinyl-5-enolpyruvyl-6-hydroxy-3-cyclohexene-1-carboxylate (SEPHCHC). The polypeptide is 2-succinyl-5-enolpyruvyl-6-hydroxy-3-cyclohexene-1-carboxylate synthase (Staphylococcus aureus (strain MSSA476)).